A 148-amino-acid chain; its full sequence is Putative nickel-responsive regulator (148 aa).

Residues His88, His99, His101, and Cys107 each coordinate Ni(2+).

Belongs to the transcriptional regulatory CopG/NikR family. Ni(2+) is required as a cofactor.

Transcriptional regulator. The sequence is that of Putative nickel-responsive regulator from Helicobacter pylori (strain G27).